A 144-amino-acid polypeptide reads, in one-letter code: Glycine-rich protein HC1 (144 aa).

The chain crosses the membrane as a helical span at residues I5–A25. 11 repeat units span residues G37 to G42, G43 to G48, G50 to G55, G56 to G61, G63 to G68, G69 to G74, G76 to G81, G82 to G87, G89 to G94, G102 to G107, and G108 to G113. An 11 X 6 AA tandem repeats of G-Y-[NH]-N-G -G region spans residues G37–G113.

This sequence belongs to the GRP family.

It localises to the membrane. The sequence is that of Glycine-rich protein HC1 from Oxybasis rubra (Red goosefoot).